The sequence spans 84 residues: Small ribosomal subunit protein uS17 (84 aa).

This sequence belongs to the universal ribosomal protein uS17 family. As to quaternary structure, part of the 30S ribosomal subunit.

Its function is as follows. One of the primary rRNA binding proteins, it binds specifically to the 5'-end of 16S ribosomal RNA. The chain is Small ribosomal subunit protein uS17 from Borrelia garinii subsp. bavariensis (strain ATCC BAA-2496 / DSM 23469 / PBi) (Borreliella bavariensis).